The primary structure comprises 194 residues: Xanthine phosphoribosyltransferase (194 aa).

The xanthine site is built by Leu-20 and Asn-27. 128–132 (ANGQA) lines the 5-phospho-alpha-D-ribose 1-diphosphate pocket. Residue Lys-156 participates in xanthine binding.

Belongs to the purine/pyrimidine phosphoribosyltransferase family. Xpt subfamily. Homodimer.

It is found in the cytoplasm. It carries out the reaction XMP + diphosphate = xanthine + 5-phospho-alpha-D-ribose 1-diphosphate. It functions in the pathway purine metabolism; XMP biosynthesis via salvage pathway; XMP from xanthine: step 1/1. In terms of biological role, converts the preformed base xanthine, a product of nucleic acid breakdown, to xanthosine 5'-monophosphate (XMP), so it can be reused for RNA or DNA synthesis. The protein is Xanthine phosphoribosyltransferase of Oceanobacillus iheyensis (strain DSM 14371 / CIP 107618 / JCM 11309 / KCTC 3954 / HTE831).